We begin with the raw amino-acid sequence, 175 residues long: ATP-dependent protease subunit HslV (175 aa).

Thr-2 is a catalytic residue. Na(+)-binding residues include Ala-156, Cys-159, and Thr-162.

It belongs to the peptidase T1B family. HslV subfamily. As to quaternary structure, a double ring-shaped homohexamer of HslV is capped on each side by a ring-shaped HslU homohexamer. The assembly of the HslU/HslV complex is dependent on binding of ATP.

It localises to the cytoplasm. It catalyses the reaction ATP-dependent cleavage of peptide bonds with broad specificity.. Its activity is regulated as follows. Allosterically activated by HslU binding. In terms of biological role, protease subunit of a proteasome-like degradation complex believed to be a general protein degrading machinery. In Rhizobium etli (strain CIAT 652), this protein is ATP-dependent protease subunit HslV.